The sequence spans 339 residues: Lipopolysaccharide glucosyltransferase WaaO (339 aa).

UDP is bound by residues 34–39 (GTDKNF) and 131–132 (DA). Residues Asp131 and Asp133 each contribute to the Mg(2+) site. 2 short sequence motifs (DXD) span residues 131-133 (DAD) and 220-222 (DQD). His265 is a binding site for Mg(2+). 265–271 (HYIGPTK) contacts UDP.

This sequence belongs to the glycosyltransferase 8 family. It depends on Mg(2+) as a cofactor.

The enzyme catalyses UDP-glucose + lipopolysaccharide = UDP + alpha-D-glucosyl-lipopolysaccharide.. The catalysed reaction is alpha-D-Gal-(1-&gt;6)-alpha-D-Glc-(1-&gt;3)-[L-alpha-D-Hep-(1-&gt;7)]-4-O-PO3(2-)-L-alpha-D-Hep-(1-&gt;3)-4-O-PO3(2-)-L-alpha-D-Hep-(1-&gt;5)-[alpha-Kdo-(2-&gt;4)]-alpha-Kdo-(2-&gt;6)-lipid A + UDP-alpha-D-glucose = alpha-D-Glc-(1-&gt;3)-[alpha-D-Gal-(1-&gt;6)]-alpha-D-Glc-(1-&gt;3)-[L-alpha-D-Hep-(1-&gt;7)]-4-O-PO3(2-)-L-alpha-D-Hep-(1-&gt;3)-4-O-PO3(2-)-L-alpha-D-Hep-(1-&gt;5)-[alpha-Kdo-(2-&gt;4)]-alpha-Kdo-(2-&gt;6)-lipid A + UDP + H(+). It participates in bacterial outer membrane biogenesis; LPS core biosynthesis. In terms of biological role, glucosyltransferase involved in the biosynthesis of the core oligosaccharide region of lipopolysaccharide (LPS). Catalyzes the addition of a second glucose (glucose II) to the first outer-core glucose (glucose I). In vitro, can add multiple glucose residues to its lipid acceptor. Activity does not require the branched galactose added by WaaB, but it is higher in the presence of this branched galactose. In the absence of a lipid acceptor, can hydrolyze UDP-glucose, but not UDP-galactose. In Escherichia coli (strain K12), this protein is Lipopolysaccharide glucosyltransferase WaaO.